Reading from the N-terminus, the 341-residue chain is Ribosomal RNA small subunit methyltransferase H (341 aa).

S-adenosyl-L-methionine contacts are provided by residues 47 to 49 (GGY), aspartate 64, phenylalanine 91, aspartate 109, and glutamine 116.

Belongs to the methyltransferase superfamily. RsmH family.

It is found in the cytoplasm. The catalysed reaction is cytidine(1402) in 16S rRNA + S-adenosyl-L-methionine = N(4)-methylcytidine(1402) in 16S rRNA + S-adenosyl-L-homocysteine + H(+). In terms of biological role, specifically methylates the N4 position of cytidine in position 1402 (C1402) of 16S rRNA. In Sinorhizobium medicae (strain WSM419) (Ensifer medicae), this protein is Ribosomal RNA small subunit methyltransferase H.